The chain runs to 563 residues: Autotransporter BimA (563 aa).

The interval 1 to 20 (MKYRRLSLAHARQDSGQAAS) is disordered. The first 48 residues, 1-48 (MKYRRLSLAHARQDSGQAASNARSRRFARLLCSSIAPLALGFSADAFA), serve as a signal peptide directing secretion. The tract at residues 61–472 (APNDAHGNLL…NLAISNSNAY (412 aa)) is surface exposed passenger domain. Positions 65–82 (AHGNLLDEIRRGVPLRHV) constitute a WH2 domain. The segment at 96–130 (TLADAMRRVIDSRRTAFDSPPATPASPSPSWSDDE) is central and acidic domains. The tract at residues 109-350 (RTAFDSPPAT…PARPGGGQFT (242 aa)) is disordered. Composition is skewed to low complexity over residues 138-150 (ATRP…SAAR), 162-197 (PASA…STPR), and 211-227 (SPAA…AHSR). 2 stretches are compositionally biased toward polar residues: residues 228–238 (GSTQPPSNLST) and 269–281 (SRGS…NLST). Residues 473 to 509 (TNQRIGDLQQSITETARDAYSGVAAATALTMIPDVDR) are outer membrane translocation of the passenger domain. The next 4 membrane-spanning stretches (beta stranded) occupy residues 510–519 (DKMLSIGVGG), 525–536 (HRAVALGGTARI), 543–549 (RAGVAMS), and 553–563 (NTVGVGMSWQW). Positions 510–563 (DKMLSIGVGGAVYKGHRAVALGGTARIGENLKVRAGVAMSAGGNTVGVGMSWQW) are translocator domain.

It belongs to the autotransporter-2 (AT-2) (TC 1.B.40) family. Homotrimer. Interacts with host G-actin; the interaction is direct. Interacts (via central and acidic domains) with host ACTR2/ARP2 and ACTR3/ARP3.

The protein localises to the cell outer membrane. It localises to the cell surface. In terms of biological role, during host cell infection, required for actin-based intracellular motility. Mediates actin tail formation at one pole of the bacteria surface by recruiting host Arp2/3 (ACTR3/ARP3-ACTR2/ARP2) which leads to actin polymerization which provides the propulsive force for intracellular movement and intercellular dissemination of the bacterium. This is Autotransporter BimA from Burkholderia thailandensis (strain ATCC 700388 / DSM 13276 / CCUG 48851 / CIP 106301 / E264).